The primary structure comprises 214 residues: UPF0502 protein Spro_2794 (214 aa).

It belongs to the UPF0502 family.

The sequence is that of UPF0502 protein Spro_2794 from Serratia proteamaculans (strain 568).